The sequence spans 311 residues: Glutaminase (311 aa).

7 residues coordinate substrate: Ser66, Asn116, Glu162, Asn169, Tyr193, Tyr245, and Val263.

It belongs to the glutaminase family. As to quaternary structure, homotetramer.

It catalyses the reaction L-glutamine + H2O = L-glutamate + NH4(+). The polypeptide is Glutaminase (Rhodopseudomonas palustris (strain ATCC BAA-98 / CGA009)).